The following is a 203-amino-acid chain: Twist-related protein 1 (203 aa).

Residues 1–18 (MMQDVSSSPVSPADDSLS) are compositionally biased toward low complexity. The tract at residues 1–105 (MMQDVSSSPV…SGGGSPQSYE (105 aa)) is disordered. Residues 34–43 (RGGRKRRSSR) show a composition bias toward basic residues. Gly residues-rich tracts occupy residues 46–65 (AGGG…GGDE) and 80–100 (GCGG…GGGS). In terms of domain architecture, bHLH spans 109-160 (TQRVMANVRGRQRTQSLNEAFAALRKIIPTLPSDKLSKIQTLKLAARYIDFL). The interval 162-192 (QVLQSDELDSKMASCSYVAHERLSYAFSVWR) is sufficient for transactivation activity.

Efficient DNA binding requires dimerization with another bHLH protein. Homodimer or heterodimer with E proteins such as TCF3. ID1 binds preferentially to TCF3 but does not interact efficiently with TWIST1 so ID1 levels control the amount of TCF3 available to dimerize with TWIST and thus determine the type of dimer formed.

The protein resides in the nucleus. Acts as a transcriptional regulator. Inhibits myogenesis by sequestrating E proteins, inhibiting trans-activation by MEF2, and inhibiting DNA-binding by MYOD1 through physical interaction. This interaction probably involves the basic domains of both proteins. Also represses expression of pro-inflammatory cytokines such as TNFA and IL1B. Regulates cranial suture patterning and fusion. Activates transcription as a heterodimer with E proteins. Regulates gene expression differentially, depending on dimer composition. Homodimers induce expression of FGFR2 and POSTN while heterodimers repress FGFR2 and POSTN expression and induce THBS1 expression. Heterodimerization is also required for osteoblast differentiation. Represses the activity of the circadian transcriptional activator: NPAS2-BMAL1 heterodimer. The chain is Twist-related protein 1 (TWIST1) from Callithrix jacchus (White-tufted-ear marmoset).